Reading from the N-terminus, the 495-residue chain is Bile acid-sensitive ion channel (495 aa).

Residues 1-30 (MEHTEKSQVHAEKGLLGKIKRYLSKRPLPS) form a binds the plasma membrane and stabilizes the channel in the closed state region. Over 1 to 61 (MEHTEKSQVH…NIAQNQNKVR (61 aa)) the chain is Cytoplasmic. The chain crosses the membrane as a helical span at residues 62-82 (KVIWLAVVLGSVSLLVWQIYS). The Extracellular segment spans residues 83–459 (RLVNYFTWPT…GLFCGASLIT (377 aa)). 6 cysteine pairs are disulfide-bonded: Cys-112–Cys-207, Cys-185–Cys-192, Cys-298–Cys-377, Cys-315–Cys-373, Cys-328–Cys-350, and Cys-330–Cys-342. N-linked (GlcNAc...) asparagine glycosylation is found at Asn-147, Asn-163, and Asn-179. 3 N-linked (GlcNAc...) asparagine glycosylation sites follow: Asn-370, Asn-405, and Asn-421. A GAS motif; ion selectivity filter motif is present at residues 454–456 (GAS). A helical transmembrane segment spans residues 460–480 (IIEIIEYFFTNFYWVLIFFLL). At 481–495 (KILETIQRTSPPQAV) the chain is on the cytoplasmic side.

It belongs to the amiloride-sensitive sodium channel (TC 1.A.6) family. ASIC5 subfamily. As to quaternary structure, forms homotrimeric channels. In terms of tissue distribution, expressed by cholangiocytes (at protein level). Detected in cerebellum, brainstem, kidney, liver, hepatocytes, lung, intestine and embryo. In the cerebellum, restricted to interneurons in the granular layer, specifically in GRM1-expressing unipolar brush cells of the vestibulocerebellum.

It is found in the apical cell membrane. The protein resides in the cell membrane. The enzyme catalyses Na(+)(in) = Na(+)(out). It catalyses the reaction Li(+)(in) = Li(+)(out). It carries out the reaction K(+)(in) = K(+)(out). The catalysed reaction is H(+)(in) = H(+)(out). With respect to regulation, inhibited by the diuretic drug amiloride. Contrary to its rat ortholog it is not inhibited by Ca(2+). Forms bile acid-gated sodium channels and may play a role in bile acid-dependent absorption and secretion by epithelial cells of the bile ducts. Displays high selectivity for sodium ions but can also permit the permeation of other cations. The gating could be indirect and the consequence of alterations of the membrane environment of the channel by bile acids. As a sodium channel of type II unipolar brush cells of the vestibulocerebellum, controlling the electrical activity of these cells, could play a role in motor coordination and balance. In Mus musculus (Mouse), this protein is Bile acid-sensitive ion channel.